The sequence spans 456 residues: Glycosyl hydrolase family 109 protein 2 (456 aa).

The segment at residues 1-33 is a signal peptide (tat-type signal); the sequence is MSGFDRRSFLKASMVTAAATALAACASSERATG. NAD(+)-binding positions include 63–64, Asp-85, 134–137, 154–155, and Asn-183; these read ER, WAWH, and EV. Substrate-binding positions include Tyr-212, Arg-231, 243–246, and Tyr-325; that span reads YPTH. An NAD(+)-binding site is contributed by Tyr-243.

This sequence belongs to the Gfo/Idh/MocA family. Glycosyl hydrolase 109 subfamily. The cofactor is NAD(+). Predicted to be exported by the Tat system. The position of the signal peptide cleavage has not been experimentally proven.

Its function is as follows. Glycosidase. The polypeptide is Glycosyl hydrolase family 109 protein 2 (Shewanella sp. (strain ANA-3)).